The primary structure comprises 77 residues: NADH-ubiquinone oxidoreductase chain 4L (77 aa).

Helical transmembrane passes span 15–37 and 44–64; these read WQRL…LKFS and MFFY…VVMV.

This sequence belongs to the complex I subunit 4L family.

It is found in the mitochondrion membrane. It catalyses the reaction a ubiquinone + NADH + 5 H(+)(in) = a ubiquinol + NAD(+) + 4 H(+)(out). In terms of biological role, core subunit of the mitochondrial membrane respiratory chain NADH dehydrogenase (Complex I) that is believed to belong to the minimal assembly required for catalysis. Complex I functions in the transfer of electrons from NADH to the respiratory chain. The immediate electron acceptor for the enzyme is believed to be ubiquinone. The protein is NADH-ubiquinone oxidoreductase chain 4L of Caenorhabditis elegans.